Here is a 473-residue protein sequence, read N- to C-terminus: Sulfate adenylyltransferase subunit 1 (473 aa).

Positions 19–238 (KTLLKFLTCG…IKIKNSISSE (220 aa)) constitute a tr-type G domain. Residues 28–35 (GSVDDGKS) form a G1 region. Residue 28 to 35 (GSVDDGKS) participates in GTP binding. The segment at 86-90 (GITID) is G2. The G3 stretch occupies residues 107–110 (DTPG). GTP-binding positions include 107–111 (DTPGH) and 162–165 (NKMD). The interval 162–165 (NKMD) is G4. The interval 200 to 202 (SAL) is G5.

It belongs to the TRAFAC class translation factor GTPase superfamily. Classic translation factor GTPase family. CysN/NodQ subfamily. In terms of assembly, heterodimer composed of CysD, the smaller subunit, and CysN.

The catalysed reaction is sulfate + ATP + H(+) = adenosine 5'-phosphosulfate + diphosphate. It participates in sulfur metabolism; hydrogen sulfide biosynthesis; sulfite from sulfate: step 1/3. In terms of biological role, with CysD forms the ATP sulfurylase (ATPS) that catalyzes the adenylation of sulfate producing adenosine 5'-phosphosulfate (APS) and diphosphate, the first enzymatic step in sulfur assimilation pathway. APS synthesis involves the formation of a high-energy phosphoric-sulfuric acid anhydride bond driven by GTP hydrolysis by CysN coupled to ATP hydrolysis by CysD. This chain is Sulfate adenylyltransferase subunit 1, found in Buchnera aphidicola subsp. Acyrthosiphon pisum (strain 5A).